We begin with the raw amino-acid sequence, 236 residues long: uncharacterized protein (236 aa).

Residues 7–74 enclose the HTH gntR-type domain; it reads RTNRRDIYLK…PKIGSFVSRV (68 aa). The segment at residues 34-53 is a DNA-binding region (H-T-H motif); the sequence is ENELAASMGVSRTPVRESLI.

This is an uncharacterized protein from Streptomyces ambofaciens.